The primary structure comprises 479 residues: Ribosomal RNA small subunit methyltransferase F (479 aa).

Residues 125–131, Glu-149, Asp-176, and Asp-194 each bind S-adenosyl-L-methionine; that span reads AAAPGSK. Cys-247 acts as the Nucleophile in catalysis.

Belongs to the class I-like SAM-binding methyltransferase superfamily. RsmB/NOP family.

It is found in the cytoplasm. The catalysed reaction is cytidine(1407) in 16S rRNA + S-adenosyl-L-methionine = 5-methylcytidine(1407) in 16S rRNA + S-adenosyl-L-homocysteine + H(+). Functionally, specifically methylates the cytosine at position 1407 (m5C1407) of 16S rRNA. This Shigella dysenteriae serotype 1 (strain Sd197) protein is Ribosomal RNA small subunit methyltransferase F.